The sequence spans 218 residues: MGTRDDEYDYLFKVVLIGDSGVGKSNLLSRFTRNEFNLESKSTIGVEFATRSIQVDGKTIKAQIWDTAGQERYRAITSAYYRGAVGALLVYDIAKHLTYENVERWLKELRDHADNNIVIMLVGNKSDLRHLRAVPTDEARAFAEKNNLSFIETSALDSTNVEEAFKNILTEIYRIVSQKQISDRSAHDESPGNNVVDISVPPTTDGQKSNKLQCCQNM.

The residue at position 2 (glycine 2) is an N-acetylglycine. Positions 20, 21, 23, 24, 25, 26, 37, 38, 40, 42, and 43 each coordinate GTP. Position 25 (serine 25) interacts with Mg(2+). The short motif at 36–47 is the Switch 1 element; the sequence is FNLESKSTIGVE. Mg(2+)-binding residues include threonine 43 and aspartate 66. The Switch 2 signature appears at 67–86; it reads TAGQERYRAITSAYYRGAVG. 6 residues coordinate GTP: glycine 69, asparagine 124, lysine 125, aspartate 127, alanine 155, and leucine 156. The segment at 183-218 is disordered; sequence DRSAHDESPGNNVVDISVPPTTDGQKSNKLQCCQNM. Polar residues predominate over residues 201–218; the sequence is PPTTDGQKSNKLQCCQNM. 2 S-geranylgeranyl cysteine lipidation sites follow: cysteine 214 and cysteine 215. The residue at position 215 (cysteine 215) is a Cysteine methyl ester. A propeptide spans 216–218 (removed in mature form); sequence QNM.

It belongs to the small GTPase superfamily. Rab family. The cofactor is Mg(2+).

Its subcellular location is the recycling endosome membrane. The protein resides in the cytoplasmic vesicle. The protein localises to the secretory vesicle. It localises to the synaptic vesicle membrane. It is found in the phagosome membrane. It catalyses the reaction GTP + H2O = GDP + phosphate + H(+). With respect to regulation, regulated by guanine nucleotide exchange factors (GEFs) which promote the exchange of bound GDP for free GTP. Regulated by GTPase activating proteins (GAPs) which increase the GTP hydrolysis activity. Inhibited by GDP dissociation inhibitors (GDIs) which prevent Rab-GDP dissociation. Its function is as follows. The small GTPases Rab are key regulators of intracellular membrane trafficking, from the formation of transport vesicles to their fusion with membranes. Rabs cycle between an inactive GDP-bound form and an active GTP-bound form that is able to recruit to membranes different set of downstream effectors directly responsible for vesicle formation, movement, tethering and fusion. That Rab plays a role in endocytic recycling, regulating apical recycling of several transmembrane proteins including cystic fibrosis transmembrane conductance regulator/CFTR, epithelial sodium channel/ENaC, potassium voltage-gated channel, and voltage-dependent L-type calcium channel. May also regulate constitutive and regulated secretion, like insulin granule exocytosis. Required for melanosome transport and release from melanocytes. Also regulates V-ATPase intracellular transport in response to extracellular acidosis. The polypeptide is Ras-related protein Rab-11B (Diplobatis ommata (Ocellated electric ray)).